We begin with the raw amino-acid sequence, 352 residues long: Cellular tumor antigen p53 (352 aa).

The interval 1–48 is transcription activation (acidic); it reads MDPVPDLPESQGSFQELWETVSYPPLETLSLPTVNEPTGSWVATGDMF. Residues 87–273 mediate DNA binding; sequence DYPGSYELEL…KTEEESRQKT (187 aa). Zn(2+) contacts are provided by C161, H164, C220, and C224. Residues 254–261 form an interaction with DNA region; the sequence is RICACPGR. Residues 262 to 271 show a composition bias toward basic and acidic residues; the sequence is DRKTEEESRQ. The disordered stretch occupies residues 262–303; sequence DRKTEEESRQKTQPKKRKVTPNTSSSKRKKSHSSGEEEDNRE. A Bipartite nuclear localization signal motif is present at residues 276-291; sequence KKRKVTPNTSSSKRKK. The interval 302 to 331 is oligomerization; it reads REVFHFEVYGRERYEFLKKINDGLELLEKE. Positions 316 to 327 match the Nuclear export signal motif; that stretch reads EFLKKINDGLEL. The segment at 330–352 is disordered; sequence KESKSKNKDSGMVPSSGKKLKSN. Residues 334 to 350 are basic (repression of DNA-binding); sequence SKNKDSGMVPSSGKKLK. A Phosphoserine modification is found at S351.

Belongs to the p53 family. Binds DNA as a homotetramer. Requires Zn(2+) as cofactor.

It localises to the cytoplasm. It is found in the nucleus. In terms of biological role, multifunctional transcription factor that induces cell cycle arrest, DNA repair or apoptosis upon binding to its target DNA sequence. Acts as a tumor suppressor in many tumor types; induces growth arrest or apoptosis depending on the physiological circumstances and cell type. Negatively regulates cell division by controlling expression of a set of genes required for this process. One of the activated genes is an inhibitor of cyclin-dependent kinases. Apoptosis induction seems to be mediated either by stimulation of BAX and FAS antigen expression, or by repression of Bcl-2 expression. This is Cellular tumor antigen p53 (tp53) from Oryzias latipes (Japanese rice fish).